Consider the following 449-residue polypeptide: Na(+)/H(+) antiporter NhaA (449 aa).

12 helical membrane-spanning segments follow: residues 30 to 50 (IFLI…WAGA), 69 to 89 (FGLT…FLVA), 112 to 132 (LLAA…LNLG), 138 to 158 (GWGI…GLLG), 168 to 188 (FLIA…ALFY), 192 to 212 (LSWI…LMNW), 218 to 238 (LIWY…SGIH), 241 to 261 (IAGV…SKIL), 312 to 332 (SLVD…NAGV), 348 to 368 (LGIL…FTLI), 386 to 406 (IIGI…ITNL), and 419 to 439 (ISIL…LLLT).

Belongs to the NhaA Na(+)/H(+) (TC 2.A.33) antiporter family.

The protein resides in the cell inner membrane. It carries out the reaction Na(+)(in) + 2 H(+)(out) = Na(+)(out) + 2 H(+)(in). Its function is as follows. Na(+)/H(+) antiporter that extrudes sodium in exchange for external protons. The protein is Na(+)/H(+) antiporter NhaA of Christiangramia forsetii (strain DSM 17595 / CGMCC 1.15422 / KT0803) (Gramella forsetii).